Reading from the N-terminus, the 313-residue chain is Olfactory receptor 10Z1 (313 aa).

At 1-25 the chain is on the extracellular side; sequence MGQTNVTSWRDFVFLGFSSSGELQL. A glycan (N-linked (GlcNAc...) asparagine) is linked at Asn5. The chain crosses the membrane as a helical span at residues 26 to 46; the sequence is LLFALFLSLYLVTLTSNVFII. Residues 47–54 are Cytoplasmic-facing; sequence IAIRLDSH. A helical transmembrane segment spans residues 55 to 75; it reads LHTPMYLFLSFLSFSETCYTL. Topologically, residues 76-99 are extracellular; sequence GIIPRMLSGLAGGDQAISYVGCAA. Cys97 and Cys189 are joined by a disulfide. A helical membrane pass occupies residues 100–120; the sequence is QMFFSASWACTNCFLLAAMGF. Residues 121–139 are Cytoplasmic-facing; it reads DRYVAICAPLHYASHMNPT. The chain crosses the membrane as a helical span at residues 140-160; that stretch reads LCAQLVITSFLTGYLFGLGMT. At 161–197 the chain is on the extracellular side; that stretch reads LVIFHLSFCSSHEIQHFFCDTPPVLSLACGDTGPSEL. Residues 198 to 217 traverse the membrane as a helical segment; it reads RIFILSLLVLLVSFFFITIS. The Cytoplasmic portion of the chain corresponds to 218–237; that stretch reads YAYILAAILRIPSAEGQKKA. A helical membrane pass occupies residues 238–258; the sequence is FSTCASHLTVVIIHYGCASFV. At 259-271 the chain is on the extracellular side; it reads YLRPKASYSLERD. Residues 272–292 form a helical membrane-spanning segment; it reads QLIAMTYTVVTPLLNPIVYSL. At 293–313 the chain is on the cytoplasmic side; that stretch reads RNRAIQTALRNAFRGRLLGKG.

The protein belongs to the G-protein coupled receptor 1 family.

Its subcellular location is the cell membrane. Odorant receptor. This is Olfactory receptor 10Z1 (OR10Z1) from Homo sapiens (Human).